Consider the following 312-residue polypeptide: Protoheme IX farnesyltransferase 2 (312 aa).

A run of 8 helical transmembrane segments spans residues 31 to 51 (VMSLVIFTALVGLMIAPGHIH), 52 to 72 (PVLGFIAILCIAVGAGASGAL), 119 to 139 (ALVNWYAGGLLAFTIFFYVVI), 152 to 172 (IVIGGAAGALPPVVAWAAATG), 179 to 199 (LLLFLIIFFWTPPHFWALALF), 225 to 245 (ILLYTIVLVAIAAAPWPLGYF), 247 to 267 (WVYGVTSLILGAGMLVLAIEV), and 283 to 303 (LFAFSILYLFALFAVLLLDVV).

This sequence belongs to the UbiA prenyltransferase family. Protoheme IX farnesyltransferase subfamily.

The protein resides in the cell inner membrane. It carries out the reaction heme b + (2E,6E)-farnesyl diphosphate + H2O = Fe(II)-heme o + diphosphate. It participates in porphyrin-containing compound metabolism; heme O biosynthesis; heme O from protoheme: step 1/1. In terms of biological role, converts heme B (protoheme IX) to heme O by substitution of the vinyl group on carbon 2 of heme B porphyrin ring with a hydroxyethyl farnesyl side group. This chain is Protoheme IX farnesyltransferase 2, found in Nitrobacter winogradskyi (strain ATCC 25391 / DSM 10237 / CIP 104748 / NCIMB 11846 / Nb-255).